The chain runs to 157 residues: Sorting nexin-3 (157 aa).

The disordered stretch occupies residues 1–21 (MSKPFQPISDVINTSPKNKSQ). Residues 11–21 (VINTSPKNKSQ) are compositionally biased toward polar residues. Residues 32 to 152 (NFLEIEVKNP…EFIQNEKWDP (121 aa)) form the PX domain. Positions 75, 77, 101, and 117 each coordinate a 1,2-diacyl-sn-glycero-3-phospho-(1D-myo-inositol-3-phosphate).

It belongs to the sorting nexin family.

Its subcellular location is the cytoplasm. The protein resides in the golgi apparatus membrane. The protein localises to the prevacuolar compartment membrane. Required for retention of late Golgi membrane proteins. Component of the retrieval machinery that functions by direct interaction with the cytosolic tails of certain TGN membrane proteins during the sorting/budding process at the prevacuolar compartment. Binds phosphatidylinositol 3-phosphate (PtdIns(P3)). In Candida albicans (strain SC5314 / ATCC MYA-2876) (Yeast), this protein is Sorting nexin-3 (SNX3).